The sequence spans 86 residues: Small ribosomal subunit protein bS16 (86 aa).

The protein belongs to the bacterial ribosomal protein bS16 family.

The chain is Small ribosomal subunit protein bS16 from Thermoanaerobacter sp. (strain X514).